Consider the following 137-residue polypeptide: Probable glycine cleavage system H protein 1 (137 aa).

The region spanning 31–113 is the Lipoyl-binding domain; sequence VAVIGITDYA…YGEGWIFKLK (83 aa). Residue Lys-72 is modified to N6-lipoyllysine.

Belongs to the GcvH family. In terms of assembly, the glycine cleavage system is composed of four proteins: P, T, L and H. The cofactor is (R)-lipoate.

In terms of biological role, the glycine cleavage system catalyzes the degradation of glycine. The H protein shuttles the methylamine group of glycine from the P protein to the T protein. In Saccharolobus solfataricus (strain ATCC 35092 / DSM 1617 / JCM 11322 / P2) (Sulfolobus solfataricus), this protein is Probable glycine cleavage system H protein 1.